Consider the following 101-residue polypeptide: Small ribosomal subunit protein uS10 (101 aa).

It belongs to the universal ribosomal protein uS10 family. Part of the 30S ribosomal subunit.

Its function is as follows. Involved in the binding of tRNA to the ribosomes. This chain is Small ribosomal subunit protein uS10, found in Rhodococcus erythropolis (strain PR4 / NBRC 100887).